Consider the following 97-residue polypeptide: Large ribosomal subunit protein uL23 (97 aa).

Belongs to the universal ribosomal protein uL23 family. Part of the 50S ribosomal subunit. Contacts protein L29, and trigger factor when it is bound to the ribosome.

Its function is as follows. One of the early assembly proteins it binds 23S rRNA. One of the proteins that surrounds the polypeptide exit tunnel on the outside of the ribosome. Forms the main docking site for trigger factor binding to the ribosome. This chain is Large ribosomal subunit protein uL23, found in Anaeromyxobacter dehalogenans (strain 2CP-C).